The chain runs to 914 residues: Eukaryotic initiation factor 4F subunit p130 (914 aa).

Residues 1–12 (MTDQRGPPPPHP) show a composition bias toward pro residues. Disordered stretches follow at residues 1-84 (MTDQ…YNNR), 128-205 (PPYT…NEAV), 240-351 (ERKK…VNKS), and 457-535 (IARN…LVPS). The span at 26–44 (NQYSGANNSQPNNHYNENL) shows a compositional bias: polar residues. Residues 59–73 (KNGKYGTNKYNNRNN) are compositionally biased toward low complexity. Ser74 is modified (phosphoserine). Positions 145–155 (PKTTKIEITTK) are enriched in low complexity. A compositionally biased stretch (basic and acidic residues) spans 156–195 (TGERLNLKKFHEEKKASKGEEKNDGVEQKSKSGTPFEKEA). Thr196 is subject to Phosphothreonine. The interval 201 to 315 (ANEAVKDTLT…TGSVTKSVTF (115 aa)) is interaction with PAB1. The segment covering 240-263 (ERKKNGLISETEKKQETSNHDNTD) has biased composition (basic and acidic residues). 2 stretches are compositionally biased toward polar residues: residues 298–325 (SVKTPQHVTGSVTKSVTFNEPENESSSQ) and 339–348 (ISDTTGGKTV). Thr301 is subject to Phosphothreonine. A compositionally biased stretch (basic and acidic residues) spans 496-529 (RMGDDRRSNRGYTSRKDREKAAEKAEEQAPKEEI). Ser503 bears the Phosphoserine mark. Positions 567-810 (ERKMKSLLNK…IDVKELREIK (244 aa)) constitute an MIF4G domain. The tract at residues 833–914 (QLRQKKNSQR…ALMNNDGDSD (82 aa)) is disordered. The segment covering 841–867 (QRSNSRFNNHNQSNSNRYSSNRRNMQN) has biased composition (low complexity). Residues 868-886 (TQRDSFASTKTGSFRNNQR) are compositionally biased toward polar residues. Residue Ser913 is modified to Phosphoserine.

It belongs to the eukaryotic initiation factor 4G family. Component of the eIF4F complex, which composition varies with external and internal environmental conditions. It is composed of at least eIF4A (TIF1/TIF2), eIF4E (TIF45) and eIF4G (TIF4631 or TIF4632). Interacts with PAT1 in a RNA-dependent manner.

It localises to the cytoplasm. Functionally, component of the eIF4F complex, which interacts with the mRNA cap structure and serves as an initial point of assembly for the translation apparatus. Stimulates translation by interaction with polyadenylate-binding protein PAB1, bringing the 5'- and 3'-ends of the mRNA in proximity. The formation of this circular mRNP structure appears to be critical for the synergistic effects of the cap and the poly(A) tail in facilitating translation initiation, recycling of ribosomes, and mRNA stability. TIF4632 is probably essential when TIF4631 is missing. The protein is Eukaryotic initiation factor 4F subunit p130 of Saccharomyces cerevisiae (strain ATCC 204508 / S288c) (Baker's yeast).